We begin with the raw amino-acid sequence, 367 residues long: Aurora kinase (367 aa).

Composition is skewed to polar residues over residues 1-29 and 37-48; these read MQRNSLVNIKLNANSPSKKTTTRPNTSRI and HSPQQRNPNSKI. Positions 1–52 are disordered; sequence MQRNSLVNIKLNANSPSKKTTTRPNTSRINKPWRISHSPQQRNPNSKIPSPV. Serine 5 is subject to Phosphoserine; by autocatalysis. Residue serine 76 is modified to Phosphoserine. One can recognise a Protein kinase domain in the interval 104 to 355; the sequence is FELGKKLGKG…LGDVKMHPWI (252 aa). ATP is bound by residues 110-118 and lysine 133; that span reads LGKGKFGKV. Aspartate 227 serves as the catalytic Proton acceptor. Threonine 260 is modified (phosphothreonine; by autocatalysis).

This sequence belongs to the protein kinase superfamily. Ser/Thr protein kinase family. Aurora subfamily. Component of the CPC complex at least composed of IPL1, BIR1 and SLI15.

It localises to the nucleus. It is found in the cytoplasm. Its subcellular location is the cytoskeleton. The protein localises to the spindle. The protein resides in the chromosome. It localises to the centromere. It is found in the kinetochore. The enzyme catalyses L-seryl-[protein] + ATP = O-phospho-L-seryl-[protein] + ADP + H(+). The catalysed reaction is L-threonyl-[protein] + ATP = O-phospho-L-threonyl-[protein] + ADP + H(+). Functionally, component of the chromosomal passenger complex (CPC), a complex that acts as a key regulator of chromosome segregation and cytokinesis. Has a role in error-correction of aberrent kinetochore-microtubule attachments to ensure that sister kinetochores become bioriented and connect to opposite poles by promoting spindle assembly checkpoint signaling. Acts in opposition to the phosphatase PP1. Not required for kinetochore detachment from microtubules during replication of centromeric DNA. Phosphorylates histone H3 to form H3S10ph during mitosis and meiosis. Phosphorylates CNN1, which contributes to the enrichment of CNN1 on anaphase kinetochores. Phosphorylates RGD1. The chain is Aurora kinase (IPL1) from Saccharomyces cerevisiae (strain ATCC 204508 / S288c) (Baker's yeast).